The sequence spans 149 residues: Probable flagellum biosynthesis repressor protein FlbT (149 aa).

Belongs to the FlbT family.

Its function is as follows. Has a post-transcriptional repressor function in flagellum biogenesis. Associates with the 5'-UTR of fljK mRNA and promotes its degradation. The protein is Probable flagellum biosynthesis repressor protein FlbT of Rhizobium leguminosarum bv. trifolii (strain WSM2304).